Here is a 155-residue protein sequence, read N- to C-terminus: MSRRGTAEEKTAKSDPIYRNRLVNMLVNRILKHGKKSLAYQIIYRAVKKIQQKTETNPLSVLRQAIRGVTPDIAVKARRVGGSTHQVPIEIGSTQGKALAIRWLLGASRKRPGRNMAFQLSSELVDAAKGSGDAIRKKEETHRMAEANRAFAHFR.

The protein belongs to the universal ribosomal protein uS7 family. In terms of assembly, part of the 30S ribosomal subunit.

The protein localises to the plastid. It is found in the chloroplast. Functionally, one of the primary rRNA binding proteins, it binds directly to 16S rRNA where it nucleates assembly of the head domain of the 30S subunit. The polypeptide is Small ribosomal subunit protein uS7c (rps7) (Coelogyne cristata (Orchid)).